Reading from the N-terminus, the 120-residue chain is Large ribosomal subunit protein uL22 (120 aa).

The protein belongs to the universal ribosomal protein uL22 family. In terms of assembly, part of the 50S ribosomal subunit.

This protein binds specifically to 23S rRNA; its binding is stimulated by other ribosomal proteins, e.g. L4, L17, and L20. It is important during the early stages of 50S assembly. It makes multiple contacts with different domains of the 23S rRNA in the assembled 50S subunit and ribosome. In terms of biological role, the globular domain of the protein is located near the polypeptide exit tunnel on the outside of the subunit, while an extended beta-hairpin is found that lines the wall of the exit tunnel in the center of the 70S ribosome. The sequence is that of Large ribosomal subunit protein uL22 from Corynebacterium aurimucosum (strain ATCC 700975 / DSM 44827 / CIP 107346 / CN-1) (Corynebacterium nigricans).